The following is a 138-amino-acid chain: Small ribosomal subunit protein uS12 (138 aa).

Asp-89 is subject to 3-methylthioaspartic acid. Residues 101–138 form a disordered region; sequence ALDTAGTQNRNQGRSKYGTKRPKKGAATAAKGPVKGKK. Positions 105–114 are enriched in polar residues; it reads AGTQNRNQGR. The span at 125-138 shows a compositional bias: low complexity; it reads GAATAAKGPVKGKK.

Belongs to the universal ribosomal protein uS12 family. Part of the 30S ribosomal subunit. Contacts proteins S8 and S17. May interact with IF1 in the 30S initiation complex.

With S4 and S5 plays an important role in translational accuracy. In terms of biological role, interacts with and stabilizes bases of the 16S rRNA that are involved in tRNA selection in the A site and with the mRNA backbone. Located at the interface of the 30S and 50S subunits, it traverses the body of the 30S subunit contacting proteins on the other side and probably holding the rRNA structure together. The combined cluster of proteins S8, S12 and S17 appears to hold together the shoulder and platform of the 30S subunit. This is Small ribosomal subunit protein uS12 from Heliobacterium modesticaldum (strain ATCC 51547 / Ice1).